Here is a 352-residue protein sequence, read N- to C-terminus: Holliday junction branch migration complex subunit RuvB (352 aa).

Positions 13-201 (IPRSRKELRL…FGLCHKIEFY (189 aa)) are large ATPase domain (RuvB-L). ATP contacts are provided by residues L37, R41, G82, K85, T86, T87, 148 to 150 (EDF), R191, Y201, and R238. Residue T86 coordinates Mg(2+). The interval 202-273 (SNDELKQIIF…IIEKALDSQK (72 aa)) is small ATPAse domain (RuvB-S). Positions 276 to 352 (NRGLDNVDRK…KYISSNNEKY (77 aa)) are head domain (RuvB-H). R330 and R335 together coordinate DNA.

The protein belongs to the RuvB family. Homohexamer. Forms an RuvA(8)-RuvB(12)-Holliday junction (HJ) complex. HJ DNA is sandwiched between 2 RuvA tetramers; dsDNA enters through RuvA and exits via RuvB. An RuvB hexamer assembles on each DNA strand where it exits the tetramer. Each RuvB hexamer is contacted by two RuvA subunits (via domain III) on 2 adjacent RuvB subunits; this complex drives branch migration. In the full resolvosome a probable DNA-RuvA(4)-RuvB(12)-RuvC(2) complex forms which resolves the HJ.

It is found in the cytoplasm. The catalysed reaction is ATP + H2O = ADP + phosphate + H(+). Functionally, the RuvA-RuvB-RuvC complex processes Holliday junction (HJ) DNA during genetic recombination and DNA repair, while the RuvA-RuvB complex plays an important role in the rescue of blocked DNA replication forks via replication fork reversal (RFR). RuvA specifically binds to HJ cruciform DNA, conferring on it an open structure. The RuvB hexamer acts as an ATP-dependent pump, pulling dsDNA into and through the RuvAB complex. RuvB forms 2 homohexamers on either side of HJ DNA bound by 1 or 2 RuvA tetramers; 4 subunits per hexamer contact DNA at a time. Coordinated motions by a converter formed by DNA-disengaged RuvB subunits stimulates ATP hydrolysis and nucleotide exchange. Immobilization of the converter enables RuvB to convert the ATP-contained energy into a lever motion, pulling 2 nucleotides of DNA out of the RuvA tetramer per ATP hydrolyzed, thus driving DNA branch migration. The RuvB motors rotate together with the DNA substrate, which together with the progressing nucleotide cycle form the mechanistic basis for DNA recombination by continuous HJ branch migration. Branch migration allows RuvC to scan DNA until it finds its consensus sequence, where it cleaves and resolves cruciform DNA. The sequence is that of Holliday junction branch migration complex subunit RuvB from Prochlorococcus marinus (strain MIT 9515).